Consider the following 258-residue polypeptide: Tryptophan synthase alpha chain (258 aa).

Residues glutamate 47 and aspartate 58 each act as proton acceptor in the active site.

Belongs to the TrpA family. Tetramer of two alpha and two beta chains.

The catalysed reaction is (1S,2R)-1-C-(indol-3-yl)glycerol 3-phosphate + L-serine = D-glyceraldehyde 3-phosphate + L-tryptophan + H2O. Its pathway is amino-acid biosynthesis; L-tryptophan biosynthesis; L-tryptophan from chorismate: step 5/5. Functionally, the alpha subunit is responsible for the aldol cleavage of indoleglycerol phosphate to indole and glyceraldehyde 3-phosphate. The sequence is that of Tryptophan synthase alpha chain from Bacillus cereus (strain B4264).